Here is a 364-residue protein sequence, read N- to C-terminus: Biotin synthase (364 aa).

Positions 14–36 (DTIPPGTETPYASPSHARTEEAP) are disordered. Residues 70–308 (RKGPLATTCG…QRDILVCGGR (239 aa)) enclose the Radical SAM core domain. [4Fe-4S] cluster-binding residues include Cys88, Cys92, and Cys95. Cys164 and Cys233 together coordinate [2Fe-2S] cluster.

It belongs to the radical SAM superfamily. Biotin synthase family. As to quaternary structure, homodimer. The cofactor is [4Fe-4S] cluster. [2Fe-2S] cluster is required as a cofactor.

The catalysed reaction is (4R,5S)-dethiobiotin + (sulfur carrier)-SH + 2 reduced [2Fe-2S]-[ferredoxin] + 2 S-adenosyl-L-methionine = (sulfur carrier)-H + biotin + 2 5'-deoxyadenosine + 2 L-methionine + 2 oxidized [2Fe-2S]-[ferredoxin]. Its pathway is cofactor biosynthesis; biotin biosynthesis; biotin from 7,8-diaminononanoate: step 2/2. In terms of biological role, catalyzes the conversion of dethiobiotin (DTB) to biotin by the insertion of a sulfur atom into dethiobiotin via a radical-based mechanism. This is Biotin synthase from Nitratidesulfovibrio vulgaris (strain DSM 19637 / Miyazaki F) (Desulfovibrio vulgaris).